We begin with the raw amino-acid sequence, 157 residues long: Crossover junction endodeoxyribonuclease RuvC (157 aa).

Catalysis depends on residues D7, E66, and D139. Mg(2+)-binding residues include D7, E66, and D139.

Belongs to the RuvC family. Homodimer which binds Holliday junction (HJ) DNA. The HJ becomes 2-fold symmetrical on binding to RuvC with unstacked arms; it has a different conformation from HJ DNA in complex with RuvA. In the full resolvosome a probable DNA-RuvA(4)-RuvB(12)-RuvC(2) complex forms which resolves the HJ. Mg(2+) is required as a cofactor.

Its subcellular location is the cytoplasm. The enzyme catalyses Endonucleolytic cleavage at a junction such as a reciprocal single-stranded crossover between two homologous DNA duplexes (Holliday junction).. In terms of biological role, the RuvA-RuvB-RuvC complex processes Holliday junction (HJ) DNA during genetic recombination and DNA repair. Endonuclease that resolves HJ intermediates. Cleaves cruciform DNA by making single-stranded nicks across the HJ at symmetrical positions within the homologous arms, yielding a 5'-phosphate and a 3'-hydroxyl group; requires a central core of homology in the junction. The consensus cleavage sequence is 5'-(A/T)TT(C/G)-3'. Cleavage occurs on the 3'-side of the TT dinucleotide at the point of strand exchange. HJ branch migration catalyzed by RuvA-RuvB allows RuvC to scan DNA until it finds its consensus sequence, where it cleaves and resolves the cruciform DNA. The protein is Crossover junction endodeoxyribonuclease RuvC of Campylobacter concisus (strain 13826).